The following is a 184-amino-acid chain: MSKIGNRTITLDPAKVNLNFQKDHIAVKGPLGQIELKLPPNLPLKFELKDNNLQITRNNELKQSKIFHGTYNALITNAIIGVTQGFEKKLRLVGVGYRANVEGETLNLQLGYSHPIKEKIPKGLTVKVEKNTEITISGISKELVGQFATEVRKWRKPEPYKGKGVLYFDEVIVRKAGKTAEGKK.

Belongs to the universal ribosomal protein uL6 family. In terms of assembly, part of the 50S ribosomal subunit.

Functionally, this protein binds to the 23S rRNA, and is important in its secondary structure. It is located near the subunit interface in the base of the L7/L12 stalk, and near the tRNA binding site of the peptidyltransferase center. The chain is Large ribosomal subunit protein uL6 from Mycoplasma pneumoniae (strain ATCC 29342 / M129 / Subtype 1) (Mycoplasmoides pneumoniae).